The sequence spans 543 residues: UPF0324 membrane protein RB9488 (543 aa).

Residues 1-22 (MNSNTPSSDNSSPDNVSPDTSD) show a composition bias toward low complexity. The tract at residues 1-41 (MNSNTPSSDNSSPDNVSPDTSDMASAGDDSALATPPPRPSL) is disordered. Residues 51–73 (WWAIWCAALLLLIAFAAVWIGQP) form a helical membrane-spanning segment. The tract at residues 91–120 (VETAPENAGPSAEAENEAIETENTAPAENA) is disordered. Helical transmembrane passes span 160–182 (ISSS…AFAN), 189–211 (AGAF…WMSG), 221–243 (EYAL…PDFL), 270–292 (LALG…ITTY), 307–329 (NMVI…AAAC), 336–358 (LSLS…PAVI), 368–390 (GGAW…AVLG), 403–422 (IQNI…WVTF), 437–459 (IWYR…SILY), 479–496 (TLRG…GLET), and 511–533 (LVLY…YLMF).

Belongs to the UPF0324 family.

It localises to the cell membrane. The sequence is that of UPF0324 membrane protein RB9488 from Rhodopirellula baltica (strain DSM 10527 / NCIMB 13988 / SH1).